We begin with the raw amino-acid sequence, 1154 residues long: BEACH domain-containing protein lvsF (1154 aa).

Disordered regions lie at residues 92-123 (HLPT…EQPS) and 139-167 (TSKV…PTPT). Over residues 145 to 158 (PTPPTPTPTPPTPQ) the composition is skewed to pro residues. One can recognise a BEACH-type PH domain in the interval 289–384 (DMNERNILEL…TRNQVYDLLV (96 aa)). The BEACH domain maps to 389–697 (TNIMHINEQA…QIFKTPHPQR (309 aa)). 3 disordered regions span residues 554 to 575 (SFES…NFEN), 739 to 762 (NNLN…LNNN), and 779 to 825 (NSLN…ENLN). Composition is skewed to low complexity over residues 779 to 788 (NSLNNENNEN) and 795 to 822 (NSNS…NENE). WD repeat units follow at residues 858 to 897 (LHKD…QIRS), 900 to 939 (LCNL…ISYS), 942 to 980 (GHSD…NGAI), 992 to 1031 (DSDT…LIRR), 1034 to 1074 (CFFD…FSFK), 1076 to 1110 (KGEI…EIKD), and 1119 to 1154 (SSNE…IWQQ).

The protein is BEACH domain-containing protein lvsF (lvsF) of Dictyostelium discoideum (Social amoeba).